The sequence spans 465 residues: Argininosuccinate lyase (465 aa).

This sequence belongs to the lyase 1 family. Argininosuccinate lyase subfamily.

It localises to the cytoplasm. It catalyses the reaction 2-(N(omega)-L-arginino)succinate = fumarate + L-arginine. The protein operates within amino-acid biosynthesis; L-arginine biosynthesis; L-arginine from L-ornithine and carbamoyl phosphate: step 3/3. The polypeptide is Argininosuccinate lyase (Halorhodospira halophila (strain DSM 244 / SL1) (Ectothiorhodospira halophila (strain DSM 244 / SL1))).